We begin with the raw amino-acid sequence, 367 residues long: Quinolinate synthase (367 aa).

The iminosuccinate site is built by His45 and Ser62. Cys109 contributes to the [4Fe-4S] cluster binding site. Iminosuccinate-binding positions include Tyr140 to Asn142 and Ser161. Cys229 is a binding site for [4Fe-4S] cluster. Iminosuccinate contacts are provided by residues His255–Glu257 and Thr272. Cys319 provides a ligand contact to [4Fe-4S] cluster.

It belongs to the quinolinate synthase family. Type 3 subfamily. [4Fe-4S] cluster is required as a cofactor.

Its subcellular location is the cytoplasm. The catalysed reaction is iminosuccinate + dihydroxyacetone phosphate = quinolinate + phosphate + 2 H2O + H(+). The protein operates within cofactor biosynthesis; NAD(+) biosynthesis; quinolinate from iminoaspartate: step 1/1. Its function is as follows. Catalyzes the condensation of iminoaspartate with dihydroxyacetone phosphate to form quinolinate. The protein is Quinolinate synthase of Anoxybacillus flavithermus (strain DSM 21510 / WK1).